Reading from the N-terminus, the 529-residue chain is Arginine--tRNA ligase (529 aa).

The short motif at 113–123 is the 'HIGH' region element; sequence ANPTGPLHIGH.

Belongs to the class-I aminoacyl-tRNA synthetase family. As to quaternary structure, monomer.

It is found in the cytoplasm. It carries out the reaction tRNA(Arg) + L-arginine + ATP = L-arginyl-tRNA(Arg) + AMP + diphosphate. The chain is Arginine--tRNA ligase from Aliarcobacter butzleri (strain RM4018) (Arcobacter butzleri).